The following is a 291-amino-acid chain: Elongation factor Ts (291 aa).

The segment at 80–83 (TDFV) is involved in Mg(2+) ion dislocation from EF-Tu.

The protein belongs to the EF-Ts family.

Its subcellular location is the cytoplasm. Its function is as follows. Associates with the EF-Tu.GDP complex and induces the exchange of GDP to GTP. It remains bound to the aminoacyl-tRNA.EF-Tu.GTP complex up to the GTP hydrolysis stage on the ribosome. This chain is Elongation factor Ts, found in Limosilactobacillus reuteri (strain DSM 20016) (Lactobacillus reuteri).